The following is a 112-amino-acid chain: uncharacterized protein (112 aa).

Residues 62–82 (THSFIFFILFLFIFIFLTFSH) traverse the membrane as a helical segment.

It is found in the membrane. This is an uncharacterized protein from Saccharomyces cerevisiae (strain ATCC 204508 / S288c) (Baker's yeast).